The sequence spans 723 residues: MSEEQASSPSAKMGDEEKPVGAGEEKQKEGSKKKNKEGSGDGGRAELNPWPEYINTRLEMYNKLKAEHDSILAEKAEKDSKPIKVTLPDGKQVDAESWKTTPYQIACGISQGLADNTVIAKVNKAVWDLDRPLEEDCTLELLKFEDEEAQAVYWHSSAHIMGEAMERVYGGCLCYGPPIENGFYYDMYLEEGGVSSNDFSSLETLCKKIIKEKQAFERLEVKKETLLEMFKYNKFKCRILNEKVNTPTTTVYRCGPLIDLCRGPHVRHTGKIKTLKIHKNSSTYWEGKSDMETLQRIYGISFPDPKMLKEWEKFQEEAKNRDHRKIGRDQELYFFHELSPGSCFFLPKGAYIYNTLIEFIRSEYRKRGFQEVVTPNIYNSRLWVTSGHWEHYSENMFSFEVEKELFALKPMNCPGHCLMFDHRPRSWRELPLRVADFGVLHRNELSGALTGLTRVRRFQQDDAHIFCAMEQIEDEIKGCLDFLRTVYSIFGFSFKLNLSTRPEKFLGDIEVWNQAEKQLENSLNDFGEKWELNPGDGAFYGPKIDIQIKDAIGRYHQCATIQLDFQLPIRFNLTFVSHDGDDKKKPVIIHRAILGSVERMIAILTENYGGKWPFWLSPRQVMVVPVGPTCDEYAQKVRQQFHNAKFMVDIDLDPGCTLNKKIRNAQLAQYNFILVVGEKEKTSGTVNIRTRDNKVHGERTISETIERLQQLKHSRSKQAEEEF.

A compositionally biased stretch (polar residues) spans 1-10; sequence MSEEQASSPS. The interval 1–49 is disordered; it reads MSEEQASSPSAKMGDEEKPVGAGEEKQKEGSKKKNKEGSGDGGRAELNP. Positions 13–39 are enriched in basic and acidic residues; the sequence is MGDEEKPVGAGEEKQKEGSKKKNKEGS. S39 is subject to Phosphoserine. Residues 79–143 enclose the TGS domain; sequence DSKPIKVTLP…EEDCTLELLK (65 aa). At K243 the chain carries N6-acetyllysine. A Phosphothreonine modification is found at T246. A Phosphotyrosine modification is found at Y298. T453 is modified (phosphothreonine). S702 is modified (phosphoserine).

It belongs to the class-II aminoacyl-tRNA synthetase family. In terms of assembly, homodimer. ISGylated.

It localises to the cytoplasm. It carries out the reaction tRNA(Thr) + L-threonine + ATP = L-threonyl-tRNA(Thr) + AMP + diphosphate + H(+). In terms of biological role, catalyzes the attachment of threonine to tRNA(Thr) in a two-step reaction: threonine is first activated by ATP to form Thr-AMP and then transferred to the acceptor end of tRNA(Thr). Also edits incorrectly charged tRNA(Thr) via its editing domain, at the post-transfer stage. The sequence is that of Threonine--tRNA ligase 1, cytoplasmic (TARS1) from Bos taurus (Bovine).